We begin with the raw amino-acid sequence, 128 residues long: Regulator of ribonuclease activity B (128 aa).

The protein belongs to the RraB family. In terms of assembly, interacts with the C-terminal region of Rne.

It localises to the cytoplasm. In terms of biological role, globally modulates RNA abundance by binding to RNase E (Rne) and regulating its endonucleolytic activity. Can modulate Rne action in a substrate-dependent manner by altering the composition of the degradosome. This Idiomarina loihiensis (strain ATCC BAA-735 / DSM 15497 / L2-TR) protein is Regulator of ribonuclease activity B.